The chain runs to 389 residues: Histidinol-phosphate aminotransferase (389 aa).

The residue at position 233 (Lys233) is an N6-(pyridoxal phosphate)lysine.

The protein belongs to the class-II pyridoxal-phosphate-dependent aminotransferase family. Pyridoxal 5'-phosphate serves as cofactor.

It carries out the reaction L-histidinol phosphate + 2-oxoglutarate = 3-(imidazol-4-yl)-2-oxopropyl phosphate + L-glutamate. Its pathway is amino-acid biosynthesis; L-histidine biosynthesis; L-histidine from 5-phospho-alpha-D-ribose 1-diphosphate: step 7/9. The sequence is that of Histidinol-phosphate aminotransferase (HIS5) from Candida maltosa (Yeast).